Here is a 352-residue protein sequence, read N- to C-terminus: Phosphate acyltransferase (352 aa).

The protein belongs to the PlsX family. In terms of assembly, homodimer. Probably interacts with PlsY.

The protein resides in the cytoplasm. It carries out the reaction a fatty acyl-[ACP] + phosphate = an acyl phosphate + holo-[ACP]. It functions in the pathway lipid metabolism; phospholipid metabolism. Catalyzes the reversible formation of acyl-phosphate (acyl-PO(4)) from acyl-[acyl-carrier-protein] (acyl-ACP). This enzyme utilizes acyl-ACP as fatty acyl donor, but not acyl-CoA. This is Phosphate acyltransferase from Brucella anthropi (strain ATCC 49188 / DSM 6882 / CCUG 24695 / JCM 21032 / LMG 3331 / NBRC 15819 / NCTC 12168 / Alc 37) (Ochrobactrum anthropi).